The primary structure comprises 183 residues: Isopentenyl-diphosphate Delta-isomerase (183 aa).

Mn(2+) contacts are provided by H26 and H33. Residues 31-165 form the Nudix hydrolase domain; the sequence is SLHLAFSSWL…PWAFSPWMVS (135 aa). The active site involves C68. H70 lines the Mn(2+) pocket. Position 88 (E88) interacts with Mg(2+). Positions 115 and 117 each coordinate Mn(2+). E117 is an active-site residue.

It belongs to the IPP isomerase type 1 family. Homodimer. Mg(2+) serves as cofactor. Mn(2+) is required as a cofactor.

The protein resides in the cytoplasm. It carries out the reaction isopentenyl diphosphate = dimethylallyl diphosphate. Its pathway is isoprenoid biosynthesis; dimethylallyl diphosphate biosynthesis; dimethylallyl diphosphate from isopentenyl diphosphate: step 1/1. Catalyzes the 1,3-allylic rearrangement of the homoallylic substrate isopentenyl (IPP) to its highly electrophilic allylic isomer, dimethylallyl diphosphate (DMAPP). The sequence is that of Isopentenyl-diphosphate Delta-isomerase from Enterobacter sp. (strain 638).